We begin with the raw amino-acid sequence, 387 residues long: Phosphoglycerate kinase (387 aa).

Residues 21-23 (DLN), R36, 59-62 (HLGR), R113, and R146 each bind substrate. Residues K197, E314, and 340-343 (GGDT) contribute to the ATP site.

This sequence belongs to the phosphoglycerate kinase family. As to quaternary structure, monomer.

It localises to the cytoplasm. The enzyme catalyses (2R)-3-phosphoglycerate + ATP = (2R)-3-phospho-glyceroyl phosphate + ADP. Its pathway is carbohydrate degradation; glycolysis; pyruvate from D-glyceraldehyde 3-phosphate: step 2/5. The sequence is that of Phosphoglycerate kinase from Pseudomonas putida (strain W619).